Here is a 134-residue protein sequence, read N- to C-terminus: Lymphocyte antigen 6I (134 aa).

The first 21 residues, 1-21 (MDTSHAIKSCVLILLVTLLCA), serve as a signal peptide directing secretion. Residues 27–105 (LECYQCYGVP…ISCCQEDLCN (79 aa)) enclose the UPAR/Ly6 domain. Intrachain disulfides connect cysteine 29–cysteine 53, cysteine 32–cysteine 41, cysteine 46–cysteine 74, cysteine 78–cysteine 98, and cysteine 99–cysteine 104. The N-linked (GlcNAc...) asparagine glycan is linked to asparagine 95. Glycine 112 is lipidated: GPI-anchor amidated glycine. Residues 113–134 (SSWTTAGVLLFSLGSVLLQTLM) constitute a propeptide, removed in mature form.

Expressed in hematopoietic tissue (spleen, thymus, bone marrow). Also found in peritoneal macrophages, peripheral blood leukocytes, liver, heart, brain, kidney and lung.

It localises to the cell membrane. In Mus musculus (Mouse), this protein is Lymphocyte antigen 6I (Ly6i).